We begin with the raw amino-acid sequence, 449 residues long: Glucose-6-phosphate isomerase (449 aa).

Glutamate 291 (proton donor) is an active-site residue. Catalysis depends on residues histidine 312 and lysine 426.

Belongs to the GPI family.

It localises to the cytoplasm. It catalyses the reaction alpha-D-glucose 6-phosphate = beta-D-fructose 6-phosphate. Its pathway is carbohydrate biosynthesis; gluconeogenesis. It functions in the pathway carbohydrate degradation; glycolysis; D-glyceraldehyde 3-phosphate and glycerone phosphate from D-glucose: step 2/4. Catalyzes the reversible isomerization of glucose-6-phosphate to fructose-6-phosphate. In Streptococcus pyogenes serotype M6 (strain ATCC BAA-946 / MGAS10394), this protein is Glucose-6-phosphate isomerase.